A 377-amino-acid polypeptide reads, in one-letter code: DNA-directed RNA polymerase subunit alpha (377 aa).

An alpha N-terminal domain (alpha-NTD) region spans residues 1 to 259 (MSDSSHNLLY…KHFSVFEKMD (259 aa)). Positions 276 to 377 (KDDILHKLVL…KIRSSKNTKG (102 aa)) are alpha C-terminal domain (alpha-CTD).

It belongs to the RNA polymerase alpha chain family. Homodimer. The RNAP catalytic core consists of 2 alpha, 1 beta, 1 beta' and 1 omega subunit. When a sigma factor is associated with the core the holoenzyme is formed, which can initiate transcription.

It carries out the reaction RNA(n) + a ribonucleoside 5'-triphosphate = RNA(n+1) + diphosphate. Its function is as follows. DNA-dependent RNA polymerase catalyzes the transcription of DNA into RNA using the four ribonucleoside triphosphates as substrates. The chain is DNA-directed RNA polymerase subunit alpha from Chlamydia trachomatis serovar D (strain ATCC VR-885 / DSM 19411 / UW-3/Cx).